A 181-amino-acid chain; its full sequence is Oligoribonuclease (181 aa).

The Exonuclease domain maps to 8–171; the sequence is LVWIDMEMTG…DDIRESIAEL (164 aa). Tyr129 is an active-site residue.

It belongs to the oligoribonuclease family.

The protein localises to the cytoplasm. Its function is as follows. 3'-to-5' exoribonuclease specific for small oligoribonucleotides. The chain is Oligoribonuclease from Pseudoalteromonas atlantica (strain T6c / ATCC BAA-1087).